Here is a 489-residue protein sequence, read N- to C-terminus: Rhamnulokinase (489 aa).

13–17 provides a ligand contact to ATP; that stretch reads ASSGR. C68 and C222 are joined by a disulfide. Substrate-binding positions include G83 and 236–238; that span reads HDT. The active-site Proton acceptor is the D237. T259 lines the ATP pocket. N296 lines the substrate pocket. Position 304 (Q304) interacts with ATP. A disulfide bond links C353 and C370. G402 is an ATP binding site. The cysteines at positions 413 and 417 are disulfide-linked.

The protein belongs to the rhamnulokinase family. As to quaternary structure, monomer. It depends on Mg(2+) as a cofactor.

It catalyses the reaction L-rhamnulose + ATP = L-rhamnulose 1-phosphate + ADP + H(+). It functions in the pathway carbohydrate degradation; L-rhamnose degradation; glycerone phosphate from L-rhamnose: step 2/3. Its function is as follows. Involved in the catabolism of L-rhamnose (6-deoxy-L-mannose). Catalyzes the transfer of the gamma-phosphate group from ATP to the 1-hydroxyl group of L-rhamnulose to yield L-rhamnulose 1-phosphate. The sequence is that of Rhamnulokinase from Escherichia coli (strain SE11).